Here is a 257-residue protein sequence, read N- to C-terminus: UPF0246 protein Rpic_2164 (257 aa).

It belongs to the UPF0246 family.

The chain is UPF0246 protein Rpic_2164 from Ralstonia pickettii (strain 12J).